A 64-amino-acid chain; its full sequence is AEGEGQRDLLKAVAHILGIRDLAGINLDSSLADLGLDSLMGVEVRQTLEREHDLVLSMREVRQL.

Positions 1 to 64 (AEGEGQRDLL…VLSMREVRQL (64 aa)) constitute a Carrier domain. Position 38 is an O-(pantetheine 4'-phosphoryl)serine; alternate (Ser-38). Phosphoserine; alternate is present on Ser-38.

As to quaternary structure, homodimer which is arranged in a head to tail fashion. Interacts with CEACAM1; this interaction is insulin and phosphorylation-dependent; reduces fatty-acid synthase activity.

It localises to the cytoplasm. Its subcellular location is the melanosome. It carries out the reaction acetyl-CoA + n malonyl-CoA + 2n NADPH + 2n H(+) = a long-chain fatty acid + (n+1) CoA + n CO2 + 2n NADP(+).. Its function is as follows. Fatty acid synthetase catalyzes the formation of long-chain fatty acids from acetyl-CoA, malonyl-CoA and NADPH. This multifunctional protein has 7 catalytic activities as an acyl carrier protein. This Oryctolagus cuniculus (Rabbit) protein is Fatty acid synthase (FASN).